Consider the following 160-residue polypeptide: Transcription elongation factor GreA (160 aa).

A coiled-coil region spans residues K2–L84.

The protein belongs to the GreA/GreB family.

In terms of biological role, necessary for efficient RNA polymerase transcription elongation past template-encoded arresting sites. The arresting sites in DNA have the property of trapping a certain fraction of elongating RNA polymerases that pass through, resulting in locked ternary complexes. Cleavage of the nascent transcript by cleavage factors such as GreA or GreB allows the resumption of elongation from the new 3'terminus. GreA releases sequences of 2 to 3 nucleotides. The polypeptide is Transcription elongation factor GreA (Mesomycoplasma hyopneumoniae (strain 232) (Mycoplasma hyopneumoniae)).